The primary structure comprises 420 residues: Tryptophan synthase beta chain (420 aa).

At lysine 112 the chain carries N6-(pyridoxal phosphate)lysine.

It belongs to the TrpB family. As to quaternary structure, tetramer of two alpha and two beta chains. The cofactor is pyridoxal 5'-phosphate.

It catalyses the reaction (1S,2R)-1-C-(indol-3-yl)glycerol 3-phosphate + L-serine = D-glyceraldehyde 3-phosphate + L-tryptophan + H2O. It participates in amino-acid biosynthesis; L-tryptophan biosynthesis; L-tryptophan from chorismate: step 5/5. Functionally, the beta subunit is responsible for the synthesis of L-tryptophan from indole and L-serine. The polypeptide is Tryptophan synthase beta chain (Thermosipho africanus (strain TCF52B)).